The sequence spans 509 residues: Bifunctional pantoate ligase/cytidylate kinase (509 aa).

A pantoate--beta-alanine ligase region spans residues 1–275 (MKKLIIRKTE…CGETRLIDHV (275 aa)). 29-36 (MGNLHDGH) contacts ATP. Catalysis depends on His-36, which acts as the Proton donor. Gln-61 is a (R)-pantoate binding site. Gln-61 contacts beta-alanine. An ATP-binding site is contributed by 149-152 (GEKD). Gln-155 lines the (R)-pantoate pocket. ATP is bound at residue 186-189 (LSSR). Residues 276 to 509 (FLMKRRPIIA…DKIPKESEIK (234 aa)) are cytidylate kinase.

The protein in the N-terminal section; belongs to the pantothenate synthetase family. In the C-terminal section; belongs to the cytidylate kinase family. Type 1 subfamily.

The protein resides in the cytoplasm. The enzyme catalyses (R)-pantoate + beta-alanine + ATP = (R)-pantothenate + AMP + diphosphate + H(+). It carries out the reaction CMP + ATP = CDP + ADP. It catalyses the reaction dCMP + ATP = dCDP + ADP. The protein operates within cofactor biosynthesis; (R)-pantothenate biosynthesis; (R)-pantothenate from (R)-pantoate and beta-alanine: step 1/1. Catalyzes the condensation of pantoate with beta-alanine in an ATP-dependent reaction via a pantoyl-adenylate intermediate. Its function is as follows. Catalyzes the transfer of a phosphate group from ATP to either CMP or dCMP to form CDP or dCDP and ADP, respectively. The protein is Bifunctional pantoate ligase/cytidylate kinase of Prochlorococcus marinus (strain AS9601).